The following is a 689-amino-acid chain: Glycine--tRNA ligase beta subunit (689 aa).

The protein belongs to the class-II aminoacyl-tRNA synthetase family. As to quaternary structure, tetramer of two alpha and two beta subunits.

The protein resides in the cytoplasm. The enzyme catalyses tRNA(Gly) + glycine + ATP = glycyl-tRNA(Gly) + AMP + diphosphate. This Escherichia coli O139:H28 (strain E24377A / ETEC) protein is Glycine--tRNA ligase beta subunit.